The following is an 821-amino-acid chain: Centrosomal protein of 95 kDa (821 aa).

3 disordered regions span residues 310–354 (TLCK…FPQK), 390–474 (ATGE…DTHH), and 514–550 (KEAF…SSKA). 2 stretches are compositionally biased toward basic and acidic residues: residues 325 to 340 (ESSK…RSEN) and 390 to 410 (ATGE…HSAN). Residues 427–441 (RKPRPGFSMHRKAPY) show a composition bias toward basic residues. A phosphoserine mark is found at Ser-445, Ser-447, and Ser-449. 2 coiled-coil regions span residues 578-627 (LTKM…VKKE) and 695-789 (LQIQ…DDDA).

The protein localises to the cytoplasm. The protein resides in the cytoskeleton. It localises to the microtubule organizing center. Its subcellular location is the centrosome. It is found in the spindle pole. The protein is Centrosomal protein of 95 kDa (Cep95) of Rattus norvegicus (Rat).